The chain runs to 726 residues: uncharacterized protein (726 aa).

The 126-residue stretch at 10–135 (MRISWVVAFI…LLDFVETHLN (126 aa)) folds into the Thioredoxin domain. 2 disordered regions span residues 133–153 (HLNP…TDED) and 227–280 (VTSV…NPTG). Over residues 138 to 153 (TDPDIPSDEDVLTDED) the composition is skewed to acidic residues. Residues 675–695 (IRVLYMVLGIVTVGILVWYFS) traverse the membrane as a helical segment. Residue serine 708 is modified to Phosphoserine.

It is found in the membrane. This is an uncharacterized protein from Schizosaccharomyces pombe (strain 972 / ATCC 24843) (Fission yeast).